Reading from the N-terminus, the 83-residue chain is Exodeoxyribonuclease 7 small subunit (83 aa).

Belongs to the XseB family. Heterooligomer composed of large and small subunits.

Its subcellular location is the cytoplasm. The catalysed reaction is Exonucleolytic cleavage in either 5'- to 3'- or 3'- to 5'-direction to yield nucleoside 5'-phosphates.. Functionally, bidirectionally degrades single-stranded DNA into large acid-insoluble oligonucleotides, which are then degraded further into small acid-soluble oligonucleotides. In Novosphingobium aromaticivorans (strain ATCC 700278 / DSM 12444 / CCUG 56034 / CIP 105152 / NBRC 16084 / F199), this protein is Exodeoxyribonuclease 7 small subunit.